The chain runs to 177 residues: Tumor necrosis factor ligand superfamily member 18 (177 aa).

At 1–27 the chain is on the cytoplasmic side; the sequence is MCLSHLENMPLSHSRTQGAQRSSWKLW. The helical; Signal-anchor for type II membrane protein transmembrane segment at 28–48 threads the bilayer; the sequence is LFCSIVMLLFLCSFSWLIFIF. A THD domain is found at 47-170; sequence IFLQLETAKE…NNTYWGIILL (124 aa). Topologically, residues 49–177 are extracellular; sequence LQLETAKEPC…ILLANPQFIS (129 aa). An intrachain disulfide couples Cys-58 to Cys-78. N-linked (GlcNAc...) asparagine glycosylation is found at Asn-129 and Asn-161.

The protein belongs to the tumor necrosis factor family. Homodimer. Homotrimer. As to expression, expressed at high levels in the small intestine, ovary, testis, kidney and endothelial cells.

The protein resides in the cell membrane. In terms of biological role, cytokine that binds to TNFRSF18/AITR/GITR. Regulates T-cell responses. Can function as costimulator and lower the threshold for T-cell activation and T-cell proliferation. Important for interactions between activated T-lymphocytes and endothelial cells. Mediates activation of NF-kappa-B. Triggers increased phosphorylation of STAT1 and up-regulates expression of VCAM1 and ICAM1. Promotes leukocyte adhesion to endothelial cells. Regulates migration of monocytes from the splenic reservoir to sites of inflammation. The chain is Tumor necrosis factor ligand superfamily member 18 from Homo sapiens (Human).